The sequence spans 336 residues: Tyrosine phosphatase-like protein H1 (336 aa).

In terms of domain architecture, Tyrosine-protein phosphatase spans 27 to 295; the sequence is IKKEHHKLMK…EICYRVLCEA (269 aa).

This sequence belongs to the protein-tyrosine phosphatase family.

This Microplitis demolitor (Parasitoid wasp) protein is Tyrosine phosphatase-like protein H1 (H1).